Reading from the N-terminus, the 298-residue chain is Dihydrodipicolinate reductase-like protein CRR1, chloroplastic (298 aa).

Residues 1-25 (MAAVNCHFFQLSRHLKPSRPSFSCS) constitute a chloroplast transit peptide. An NAD(+)-binding site is contributed by 160–163 (APTL).

Belongs to the DapB family. As to expression, expressed specifically in leaves.

The protein resides in the plastid. It localises to the chloroplast stroma. Dihydrodipicolinate reductase (DHPR)-like protein that may not function as DHPR in lysine biosynthesis. Required for both formation and activity of the chloroplast NAD(P)H dehydrogenase (NDH) complex of the photosynthetic electron transport chain. May function in assembly or stabilization of the NDH complex. This is Dihydrodipicolinate reductase-like protein CRR1, chloroplastic from Arabidopsis thaliana (Mouse-ear cress).